The chain runs to 265 residues: Chorismate mutase 2 (265 aa).

Residues 10 to 265 (GSGCSNVLSL…EVEYLLRRLD (256 aa)) enclose the Chorismate mutase domain.

In terms of assembly, homodimer. Expressed in roots, stems, cauline leaves and flowers, and at lower levels in rosette leaves and siliques.

It localises to the cytoplasm. Its subcellular location is the cytosol. It carries out the reaction chorismate = prephenate. It functions in the pathway metabolic intermediate biosynthesis; prephenate biosynthesis; prephenate from chorismate: step 1/1. Its activity is regulated as follows. No allosteric regulation. This is Chorismate mutase 2 from Arabidopsis thaliana (Mouse-ear cress).